Here is a 97-residue protein sequence, read N- to C-terminus: YcgL domain-containing protein PA1295 (97 aa).

The 85-residue stretch at 3–87 (RICSVYKSPR…GEEEYIEHLP (85 aa)) folds into the YcgL domain.

The chain is YcgL domain-containing protein PA1295 from Pseudomonas aeruginosa (strain ATCC 15692 / DSM 22644 / CIP 104116 / JCM 14847 / LMG 12228 / 1C / PRS 101 / PAO1).